The primary structure comprises 1616 residues: Vitellogenin-1 (1616 aa).

The signal sequence occupies residues 1 to 19; that stretch reads MRSIIIASIVALAIAFSPA. One can recognise a Vitellogenin domain in the interval 24–689; it reads FEPKIDYHYK…EKNSFLLKDL (666 aa). A glycan (N-linked (GlcNAc...) asparagine) is linked at asparagine 1270. Positions 1310–1479 constitute a VWFD domain; that stretch reads SVCKVQKNQI…SYLLKNEECE (170 aa). 2 cysteine pairs are disulfide-bonded: cysteine 1312/cysteine 1442 and cysteine 1334/cysteine 1478. A compositionally biased stretch (acidic residues) spans 1505–1514; that stretch reads SFEETYDYEQ. A disordered region spans residues 1505 to 1531; sequence SFEETYDYEQENTNKKQKNQRSQKKSD.

As to expression, expressed in the intestine of adult hermaphrodites.

The protein resides in the secreted. Precursor of the egg-yolk proteins that are sources of nutrients during embryonic development. Together with other vitellogenins, may play a role in modulating life-span, acting via induction of autophagy and lysosomal lipolysis. This Caenorhabditis elegans protein is Vitellogenin-1 (vit-1).